Consider the following 393-residue polypeptide: Glutamyl-tRNA reductase (393 aa).

Substrate-binding positions include 47–50 (TCSR), Ser-98, 103–105 (ETD), and Gln-109. The active-site Nucleophile is the Cys-48. 177–182 (GAGAVG) contributes to the NADP(+) binding site.

The protein belongs to the glutamyl-tRNA reductase family. Homodimer.

It carries out the reaction (S)-4-amino-5-oxopentanoate + tRNA(Glu) + NADP(+) = L-glutamyl-tRNA(Glu) + NADPH + H(+). It participates in porphyrin-containing compound metabolism; protoporphyrin-IX biosynthesis; 5-aminolevulinate from L-glutamyl-tRNA(Glu): step 1/2. Its function is as follows. Catalyzes the NADPH-dependent reduction of glutamyl-tRNA(Glu) to glutamate 1-semialdehyde (GSA). The polypeptide is Glutamyl-tRNA reductase (Pyrobaculum neutrophilum (strain DSM 2338 / JCM 9278 / NBRC 100436 / V24Sta) (Thermoproteus neutrophilus)).